Here is a 205-residue protein sequence, read N- to C-terminus: MMNNKLLLLVIALLCIASNSIVESFSFKVSAKVEECIYEEIGVDLSFTAMFQVIQGGFNDIDFTIISPDKRIVYSGQRESEGTKTLRSSFAGVYSFCFSNKMSSLTDKTVSFILSVGESSPIREIAKKKDLTPIERSIMTLSDGVIAVKNEQNYFKMREAAHRNTAESTNSRVLWWSVFEAFVLIALSIWQIYYLRRFFEVKRAV.

Positions Met-1–Ser-24 are cleaved as a signal peptide. Residues Phe-25–Arg-172 are Lumenal-facing. Residues Glu-34–Val-116 enclose the GOLD domain. Residues Val-173–Tyr-193 form a helical membrane-spanning segment. Over Tyr-194–Val-205 the chain is Cytoplasmic.

The protein belongs to the EMP24/GP25L family.

It is found in the cytoplasmic vesicle membrane. Functionally, could have a role in the budding of coatomer-coated and other species of coated vesicles. In Dictyostelium discoideum (Social amoeba), this protein is Transmembrane emp24 domain-containing protein A (empA).